Here is a 118-residue protein sequence, read N- to C-terminus: Large ribosomal subunit protein bL19 (118 aa).

It belongs to the bacterial ribosomal protein bL19 family.

Functionally, this protein is located at the 30S-50S ribosomal subunit interface and may play a role in the structure and function of the aminoacyl-tRNA binding site. The sequence is that of Large ribosomal subunit protein bL19 from Beutenbergia cavernae (strain ATCC BAA-8 / DSM 12333 / CCUG 43141 / JCM 11478 / NBRC 16432 / NCIMB 13614 / HKI 0122).